The chain runs to 506 residues: Lysine--tRNA ligase (506 aa).

Mg(2+)-binding residues include E415 and E422.

The protein belongs to the class-II aminoacyl-tRNA synthetase family. As to quaternary structure, homodimer. Requires Mg(2+) as cofactor.

It localises to the cytoplasm. It carries out the reaction tRNA(Lys) + L-lysine + ATP = L-lysyl-tRNA(Lys) + AMP + diphosphate. The sequence is that of Lysine--tRNA ligase from Erwinia tasmaniensis (strain DSM 17950 / CFBP 7177 / CIP 109463 / NCPPB 4357 / Et1/99).